Reading from the N-terminus, the 181-residue chain is RNA pyrophosphohydrolase (181 aa).

The region spanning 6-150 is the Nudix hydrolase domain; it reads GYRPNVGIII…KCEVYRCALK (145 aa). Positions 38–59 match the Nudix box motif; the sequence is GGIKEGETPEQAMYRELYEEVG.

Belongs to the Nudix hydrolase family. RppH subfamily. It depends on a divalent metal cation as a cofactor.

Functionally, accelerates the degradation of transcripts by removing pyrophosphate from the 5'-end of triphosphorylated RNA, leading to a more labile monophosphorylated state that can stimulate subsequent ribonuclease cleavage. This Psychromonas ingrahamii (strain DSM 17664 / CCUG 51855 / 37) protein is RNA pyrophosphohydrolase.